The sequence spans 278 residues: 4-diphosphocytidyl-2-C-methyl-D-erythritol kinase (278 aa).

Lys-9 is an active-site residue. 89–99 (PVASGIGGGSA) is an ATP binding site. Asp-128 is a catalytic residue.

The protein belongs to the GHMP kinase family. IspE subfamily.

The enzyme catalyses 4-CDP-2-C-methyl-D-erythritol + ATP = 4-CDP-2-C-methyl-D-erythritol 2-phosphate + ADP + H(+). It functions in the pathway isoprenoid biosynthesis; isopentenyl diphosphate biosynthesis via DXP pathway; isopentenyl diphosphate from 1-deoxy-D-xylulose 5-phosphate: step 3/6. Catalyzes the phosphorylation of the position 2 hydroxy group of 4-diphosphocytidyl-2C-methyl-D-erythritol. The protein is 4-diphosphocytidyl-2-C-methyl-D-erythritol kinase of Cereibacter sphaeroides (strain KD131 / KCTC 12085) (Rhodobacter sphaeroides).